Here is a 455-residue protein sequence, read N- to C-terminus: Chromosomal replication initiator protein DnaA (455 aa).

Residues 1–74 are domain I, interacts with DnaA modulators; that stretch reads MSEQEIWEKV…LYEAIGHEIA (74 aa). Residues 74–116 form a domain II region; it reads APVFYTEEELKSLHTSEQKEENQPEQPAKKYTPGVDEAVIGGE. A compositionally biased stretch (basic and acidic residues) spans 85–95; sequence SLHTSEQKEEN. Residues 85–104 form a disordered region; the sequence is SLHTSEQKEENQPEQPAKKY. Residues 117 to 333 are domain III, AAA+ region; it reads QFNTHNTFET…GALTRVLAFS (217 aa). G161, G163, K164, and T165 together coordinate ATP. The domain IV, binds dsDNA stretch occupies residues 334–455; it reads KLQGQPITTE…ENLEKEIRNQ (122 aa).

Belongs to the DnaA family. Oligomerizes as a right-handed, spiral filament on DNA at oriC.

Its subcellular location is the cytoplasm. In terms of biological role, plays an essential role in the initiation and regulation of chromosomal replication. ATP-DnaA binds to the origin of replication (oriC) to initiate formation of the DNA replication initiation complex once per cell cycle. Binds the DnaA box (a 9 base pair repeat at the origin) and separates the double-stranded (ds)DNA. Forms a right-handed helical filament on oriC DNA; dsDNA binds to the exterior of the filament while single-stranded (ss)DNA is stabiized in the filament's interior. The ATP-DnaA-oriC complex binds and stabilizes one strand of the AT-rich DNA unwinding element (DUE), permitting loading of DNA polymerase. After initiation quickly degrades to an ADP-DnaA complex that is not apt for DNA replication. Binds acidic phospholipids. The sequence is that of Chromosomal replication initiator protein DnaA from Staphylococcus saprophyticus subsp. saprophyticus (strain ATCC 15305 / DSM 20229 / NCIMB 8711 / NCTC 7292 / S-41).